A 433-amino-acid polypeptide reads, in one-letter code: Apolipoprotein L5 (433 aa).

The interval 346–433 (HHRHLPQKAS…GRQAPGRHRQ (88 aa)) is disordered. A compositionally biased stretch (low complexity) spans 359 to 371 (SSSRGRAVRGSRV). Basic residues predominate over residues 422–433 (RKGRQAPGRHRQ).

This sequence belongs to the apolipoprotein L family. Low level of expression; detected in uterus, testis, skeletal muscle and stomach.

The protein localises to the cytoplasm. May affect the movement of lipids in the cytoplasm or allow the binding of lipids to organelles. In Homo sapiens (Human), this protein is Apolipoprotein L5 (APOL5).